A 136-amino-acid chain; its full sequence is Large-conductance mechanosensitive channel (136 aa).

A run of 4 helical transmembrane segments spans residues 9 to 29 (AFAS…GAAF), 32 to 52 (IVSS…LGGV), 54 to 74 (FSDL…VVIA), and 79 to 99 (IQTV…LKAI).

Belongs to the MscL family. As to quaternary structure, homopentamer.

Its subcellular location is the cell inner membrane. In terms of biological role, channel that opens in response to stretch forces in the membrane lipid bilayer. May participate in the regulation of osmotic pressure changes within the cell. This chain is Large-conductance mechanosensitive channel, found in Vibrio cholerae serotype O1 (strain ATCC 39541 / Classical Ogawa 395 / O395).